The following is a 334-amino-acid chain: Protein-methionine-sulfoxide reductase catalytic subunit MsrP (334 aa).

The segment at residues 1–44 is a signal peptide (tat-type signal); that stretch reads MKKIRPLTEADVTAESAFFMQRRQVLKALGISAAALSLPSTAQA. Residues Asn-88, 91-92, Cys-146, Thr-181, Asn-233, Arg-238, and 249-251 each bind Mo-molybdopterin; these read YE and GIK.

Belongs to the MsrP family. As to quaternary structure, heterodimer of a catalytic subunit (MsrP) and a heme-binding subunit (MsrQ). The cofactor is Mo-molybdopterin. In terms of processing, predicted to be exported by the Tat system. The position of the signal peptide cleavage has not been experimentally proven.

It is found in the periplasm. It catalyses the reaction L-methionyl-[protein] + a quinone + H2O = L-methionyl-(S)-S-oxide-[protein] + a quinol. The enzyme catalyses L-methionyl-[protein] + a quinone + H2O = L-methionyl-(R)-S-oxide-[protein] + a quinol. Functionally, part of the MsrPQ system that repairs oxidized periplasmic proteins containing methionine sulfoxide residues (Met-O), using respiratory chain electrons. Thus protects these proteins from oxidative-stress damage caused by reactive species of oxygen and chlorine generated by the host defense mechanisms. MsrPQ is essential for the maintenance of envelope integrity under bleach stress, rescuing a wide series of structurally unrelated periplasmic proteins from methionine oxidation, including the primary periplasmic chaperone SurA and the lipoprotein Pal. The catalytic subunit MsrP is non-stereospecific, being able to reduce both (R-) and (S-) diastereoisomers of methionine sulfoxide. The protein is Protein-methionine-sulfoxide reductase catalytic subunit MsrP of Salmonella dublin (strain CT_02021853).